A 152-amino-acid polypeptide reads, in one-letter code: Immunity protein YobK (152 aa).

As to quaternary structure, interacts with cognate toxin YobL but not with non-cognate putative toxin YeeF. The interaction inhibits the toxic activity of YobL.

It is found in the cytoplasm. In terms of biological role, immunity component of one of 6 LXG toxin-immunity modules in this strain. They promote kin selection, mediate competition in biofilms, and drive spatial segregation of different strains, indicating that LXG toxins may help avoid warfare between strains in biofilms. Mediates intercellular competition during biofilm formation; disruption of the operon disadvantages the bacteria, but overexpression of the cognate immunity protein restores growth in competition with wild-type. In situ neutralizes the toxic effect of cognate toxin YobL. Neutralizes the toxic activity of cognate toxin YobL upon expression in E.coli. Does not have immunity protein activity on other LXG toxins. This Bacillus subtilis (strain 168) protein is Immunity protein YobK (yobK).